Consider the following 536-residue polypeptide: 1,4-beta-D-glucan cellobiohydrolase B (536 aa).

The first 21 residues, 1-21 (MSSFQIYRAALLLSILATANA), serve as a signal peptide directing secretion. The catalytic stretch occupies residues 22-458 (QQVGTYTTET…SNIKFGPIGS (437 aa)). The active-site Nucleophile is glutamate 233. The active-site Proton donor is the glutamate 238. N-linked (GlcNAc...) asparagine glycosylation is found at asparagine 351 and asparagine 414. A ser/Thr-rich linker region spans residues 459–500 (TYSSGSSSGSGSSSSSSSTTTKATSTTLKTTSTTSSGSSSTS). The tract at residues 464–499 (SSSGSGSSSSSSSTTTKATSTTLKTTSTTSSGSSST) is disordered. The region spanning 500–536 (SAAQAYGQCGGQGWTGPTTCVSGYTCTYENAYYSQCL) is the CBM1 domain. 2 disulfides stabilise this stretch: cysteine 508/cysteine 525 and cysteine 519/cysteine 535.

The protein belongs to the glycosyl hydrolase 7 (cellulase C) family.

The protein localises to the secreted. The catalysed reaction is Hydrolysis of (1-&gt;4)-beta-D-glucosidic linkages in cellulose and cellotetraose, releasing cellobiose from the non-reducing ends of the chains.. The biological conversion of cellulose to glucose generally requires three types of hydrolytic enzymes: (1) Endoglucanases which cut internal beta-1,4-glucosidic bonds; (2) Exocellobiohydrolases that cut the disaccharide cellobiose from the non-reducing end of the cellulose polymer chain; (3) Beta-1,4-glucosidases which hydrolyze the cellobiose and other short cello-oligosaccharides to glucose. The chain is 1,4-beta-D-glucan cellobiohydrolase B (cbhB) from Aspergillus niger.